We begin with the raw amino-acid sequence, 543 residues long: Type I restriction enzyme MpnII methylase subunit (543 aa).

Residues 208–213 (EFFTPQ), 240–242 (SGS), and glutamate 265 each bind S-adenosyl-L-methionine.

The protein belongs to the N(4)/N(6)-methyltransferase family. In terms of assembly, the methyltransferase is composed of M and S polypeptides.

The enzyme catalyses a 2'-deoxyadenosine in DNA + S-adenosyl-L-methionine = an N(6)-methyl-2'-deoxyadenosine in DNA + S-adenosyl-L-homocysteine + H(+). In terms of biological role, the subtype gamma methyltransferase (M) subunit of a type I restriction enzyme. The M and S subunits together form a methyltransferase (MTase) that probably methylates A-2 on the top strand and A-3 on the bottom strand of the sequence 5'-GAN(7)TAY-3'. As the bacterial DNA is methylated on this sequence and this is the only type I methylase in the genome, it is probably responsible for all of the methylation on this site in the genome. The R subunit has multiple frameshifts and is probably not expressed in this bacteria. The sequence is that of Type I restriction enzyme MpnII methylase subunit from Mycoplasma pneumoniae (strain ATCC 29342 / M129 / Subtype 1) (Mycoplasmoides pneumoniae).